The following is a 207-amino-acid chain: Interferon kappa (207 aa).

The first 27 residues, 1-27 (MSTKPDMIQKCLWLEILMGIFIAGTLS), serve as a signal peptide directing secretion. Disulfide bonds link C30–C128 and C59–C181. Residues 118-148 (LDQQAEYLNQCLEEDKNENEDMKEMKENEMK) are a coiled coil.

It belongs to the alpha/beta interferon family. In terms of tissue distribution, expressed in keratinocytes, monocytes and in resting dendritic cells.

It localises to the secreted. In terms of biological role, may play a role in the regulation of immune cell function. Cytokine that imparts cellular protection against viral infection in a species-specific manner. Activates the interferon-stimulated response element signaling pathway. It is able to directly modulate cytokine release from monocytes and dendritic cells. Binds heparin. This Homo sapiens (Human) protein is Interferon kappa (IFNK).